The sequence spans 162 residues: Protein-export protein SecB (162 aa).

This sequence belongs to the SecB family. In terms of assembly, homotetramer, a dimer of dimers. One homotetramer interacts with 1 SecA dimer.

The protein resides in the cytoplasm. Functionally, one of the proteins required for the normal export of preproteins out of the cell cytoplasm. It is a molecular chaperone that binds to a subset of precursor proteins, maintaining them in a translocation-competent state. It also specifically binds to its receptor SecA. The chain is Protein-export protein SecB from Pseudomonas savastanoi pv. phaseolicola (strain 1448A / Race 6) (Pseudomonas syringae pv. phaseolicola (strain 1448A / Race 6)).